A 217-amino-acid polypeptide reads, in one-letter code: Adenylate kinase (217 aa).

10 to 15 (GAGKGT) is an ATP binding site. An NMP region spans residues 30-59 (STGDLFRANISQQTELGKLAKSYMNAGNLV). Residues threonine 31, arginine 36, 57–59 (NLV), 85–88 (GFPR), and glutamine 92 contribute to the AMP site. Residues 126-164 (GRRVCRNEPKHVFHVTYTPPKKEGVCDVCGGELYQRDDD) form an LID region. Residues arginine 127 and 137-138 (VF) contribute to the ATP site. Positions 161 and 172 each coordinate AMP. Glycine 200 lines the ATP pocket.

This sequence belongs to the adenylate kinase family. As to quaternary structure, monomer.

It localises to the cytoplasm. The enzyme catalyses AMP + ATP = 2 ADP. It functions in the pathway purine metabolism; AMP biosynthesis via salvage pathway; AMP from ADP: step 1/1. In terms of biological role, catalyzes the reversible transfer of the terminal phosphate group between ATP and AMP. Plays an important role in cellular energy homeostasis and in adenine nucleotide metabolism. This Streptomyces coelicolor (strain ATCC BAA-471 / A3(2) / M145) protein is Adenylate kinase.